The primary structure comprises 341 residues: S-adenosylmethionine:tRNA ribosyltransferase-isomerase (341 aa).

This sequence belongs to the QueA family. As to quaternary structure, monomer.

The protein localises to the cytoplasm. It catalyses the reaction 7-aminomethyl-7-carbaguanosine(34) in tRNA + S-adenosyl-L-methionine = epoxyqueuosine(34) in tRNA + adenine + L-methionine + 2 H(+). Its pathway is tRNA modification; tRNA-queuosine biosynthesis. In terms of biological role, transfers and isomerizes the ribose moiety from AdoMet to the 7-aminomethyl group of 7-deazaguanine (preQ1-tRNA) to give epoxyqueuosine (oQ-tRNA). This Herminiimonas arsenicoxydans protein is S-adenosylmethionine:tRNA ribosyltransferase-isomerase.